A 344-amino-acid polypeptide reads, in one-letter code: RNA 3'-terminal phosphate cyclase (344 aa).

Residues Gln-103 and 283 to 287 (HLADQ) contribute to the ATP site. His-308 acts as the Tele-AMP-histidine intermediate in catalysis.

The protein belongs to the RNA 3'-terminal cyclase family. Type 1 subfamily.

The protein localises to the cytoplasm. It carries out the reaction a 3'-end 3'-phospho-ribonucleotide-RNA + ATP = a 3'-end 2',3'-cyclophospho-ribonucleotide-RNA + AMP + diphosphate. In terms of biological role, catalyzes the conversion of 3'-phosphate to a 2',3'-cyclic phosphodiester at the end of RNA. The mechanism of action of the enzyme occurs in 3 steps: (A) adenylation of the enzyme by ATP; (B) transfer of adenylate to an RNA-N3'P to produce RNA-N3'PP5'A; (C) and attack of the adjacent 2'-hydroxyl on the 3'-phosphorus in the diester linkage to produce the cyclic end product. The biological role of this enzyme is unknown but it is likely to function in some aspects of cellular RNA processing. The polypeptide is RNA 3'-terminal phosphate cyclase (Salmonella paratyphi C (strain RKS4594)).